Consider the following 1393-residue polypeptide: DNA glycosylase/AP lyase ROS1 (1393 aa).

Disordered stretches follow at residues Met-1–Phe-25, Ser-98–Arg-186, and Leu-237–Glu-265. Residues Ser-98 to Glu-108 show a composition bias toward low complexity. The segment covering Pro-117 to Val-126 has biased composition (basic residues). 2 stretches are compositionally biased toward basic and acidic residues: residues Arg-127–Pro-138 and Lys-162–Asp-171. Residues Pro-243–Gln-256 show a composition bias toward basic residues. Positions Lys-528 to Pro-626 are DEMETER. The span at Glu-653–Thr-672 shows a compositional bias: polar residues. Disordered stretches follow at residues Glu-653 to Val-722 and Ser-789 to Gln-830. Residues Ser-687–His-698 show a composition bias toward low complexity. Positions Glu-699–Val-722 are enriched in basic and acidic residues. The segment covering Lys-816 to Gln-830 has biased composition (polar residues). A Glycyl lysine isopeptide (Lys-Gly) (interchain with G-Cter in ubiquitin) cross-link involves residue Lys-901. [4Fe-4S] cluster-binding residues include Cys-1038, Cys-1045, Cys-1048, and Cys-1054.

The protein belongs to the DNA glycosylase family. DEMETER subfamily. Interacts (via the central region) with ZDP. Binds to RPA2A. Interacts with XRCC1. Interacts probably with a complex made of MBD7, IDM1, IDM2 and IDM3. Interacts with APE1L. [4Fe-4S] cluster serves as cofactor. As to expression, expressed ubiquitously in both vegetative and reproductive organs.

It is found in the nucleus. The protein resides in the nucleolus. The enzyme catalyses 2'-deoxyribonucleotide-(2'-deoxyribose 5'-phosphate)-2'-deoxyribonucleotide-DNA = a 3'-end 2'-deoxyribonucleotide-(2,3-dehydro-2,3-deoxyribose 5'-phosphate)-DNA + a 5'-end 5'-phospho-2'-deoxyribonucleoside-DNA + H(+). With respect to regulation, stimulated by ZDP. Stimulated by XRCC1. Its function is as follows. Bifunctional DNA glycosylase/lyase, which excises 5-methylcytosine (5-meC) and 5-hydroxymethylcytosine (5-hmeC), leaving an apyrimidinic (AP) site that is subsequently incised by the lyase activity. Generates 3'-phosphor-alpha,beta-unsaturated aldehyde (3'-PUA) as a primary 5-meC excision intermediate. Prevents DNA hypermethylation, specifically in the promoter of otherwise silenced loci. May be involved in DNA repair through its nicking activity on methylated DNA. Binds with similar affinity to both methylated and non-methylated DNA. Highly distributive behavior on DNA substrates containing multiple 5-meC residues. Involved with Pol IV in the remodeling of the 5S rDNA chromatin via DNA methylation modifications during the first days of development post-germination. Participates in UV-B induced- and oxidative DNA damage repair. The protein is DNA glycosylase/AP lyase ROS1 of Arabidopsis thaliana (Mouse-ear cress).